A 130-amino-acid polypeptide reads, in one-letter code: Small ribosomal subunit protein uS8 (130 aa).

It belongs to the universal ribosomal protein uS8 family. Part of the 30S ribosomal subunit.

Functionally, one of the primary rRNA binding proteins, it binds directly to 16S rRNA central domain where it helps coordinate assembly of the platform of the 30S subunit. This chain is Small ribosomal subunit protein uS8, found in Caldivirga maquilingensis (strain ATCC 700844 / DSM 13496 / JCM 10307 / IC-167).